Reading from the N-terminus, the 205-residue chain is MKKIIICFIFVFSINVSFADATSELIDKIKNIHSMTANFNQKLIDGQTNNNLNSKGNMSLKKPQYFKWITTSPNNQEIVSNGTKLWIYDGDLDQLIIKKVSNDIAQFPYLILLSKNTNNINKLFTVTAQDNNSYILKPKNDQMIDSIKIKFTPNNQLEYLEISTSLNQFTKIEFNNVKTDVDISNTSFDFKAPQNTDIIDETKSA.

The N-terminal stretch at methionine 1 to alanine 19 is a signal peptide.

Belongs to the LolA family. In terms of assembly, monomer.

The protein localises to the periplasm. Its function is as follows. Participates in the translocation of lipoproteins from the inner membrane to the outer membrane. Only forms a complex with a lipoprotein if the residue after the N-terminal Cys is not an aspartate (The Asp acts as a targeting signal to indicate that the lipoprotein should stay in the inner membrane). The polypeptide is Outer-membrane lipoprotein carrier protein (Francisella tularensis subsp. holarctica (strain LVS)).